Here is a 696-residue protein sequence, read N- to C-terminus: D-(-)-3-hydroxybutyrate oligomer hydrolase (696 aa).

Residues 1 to 26 (MTKLGWGRRVVWGAALAAVAMLGACN) form the signal peptide. Serine 309 acts as the Charge relay system in catalysis.

Belongs to the D-(-)-3-hydroxybutyrate oligomer hydrolase family.

It localises to the secreted. It catalyses the reaction (3R)-hydroxybutanoate dimer + H2O = 2 (R)-3-hydroxybutanoate + H(+). It functions in the pathway lipid metabolism; butanoate metabolism. In terms of biological role, participates in the degradation of poly-3-hydroxybutyrate (PHB). It works downstream of poly(3-hydroxybutyrate) depolymerase, hydrolyzing D(-)-3-hydroxybutyrate oligomers of various length (3HB-oligomers) into 3HB-monomers. The chain is D-(-)-3-hydroxybutyrate oligomer hydrolase from Burkholderia cenocepacia (strain HI2424).